Consider the following 319-residue polypeptide: Lambda-crystallin homolog (319 aa).

Ala2 bears the N-acetylalanine mark. Position 3 is a phosphoserine (Ser3). NAD(+)-binding positions include 16-17 (VI), Asp36, Glu97, and Lys102. Position 111 is a phosphoserine (Ser111).

This sequence belongs to the 3-hydroxyacyl-CoA dehydrogenase family. Homodimer. Widely expressed, with highest levels in liver and kidney.

The protein resides in the cytoplasm. The catalysed reaction is L-gulonate + NAD(+) = 3-dehydro-L-gulonate + NADH + H(+). With respect to regulation, inhibited by malonate. Functionally, has high L-gulonate 3-dehydrogenase activity. It also exhibits low dehydrogenase activity toward L-3-hydroxybutyrate (HBA) and L-threonate. The protein is Lambda-crystallin homolog (CRYL1) of Homo sapiens (Human).